Here is a 318-residue protein sequence, read N- to C-terminus: Ribose-phosphate pyrophosphokinase 2 (318 aa).

Asp-132, His-134, His-143, and Asp-147 together coordinate Mg(2+).

Belongs to the ribose-phosphate pyrophosphokinase family.

The protein localises to the cytoplasm. The catalysed reaction is D-ribose 5-phosphate + ATP = 5-phospho-alpha-D-ribose 1-diphosphate + AMP + H(+). The protein operates within metabolic intermediate biosynthesis; 5-phospho-alpha-D-ribose 1-diphosphate biosynthesis; 5-phospho-alpha-D-ribose 1-diphosphate from D-ribose 5-phosphate (route I): step 1/1. Its function is as follows. 5-phosphoribose 1-diphosphate synthase involved in nucleotide, histidine, and tryptophan biosynthesis. Active in heteromultimeric complexes with other 5-phosphoribose 1-diphosphate synthases (PRS2, PRS3, PRS4 and PRS5). This is Ribose-phosphate pyrophosphokinase 2 (PRS2) from Saccharomyces cerevisiae (strain ATCC 204508 / S288c) (Baker's yeast).